Consider the following 538-residue polypeptide: NADH-quinone oxidoreductase subunit N (538 aa).

The next 14 helical transmembrane spans lie at 28–48 (LAPVFVLMAGACVAVLVEAFV), 57–77 (QIIVTVATLVVAIASTLTTIA), 94–114 (PTLATWVILLATGLGTVVLFA), 147–167 (HTEVYPLLMFAALGMMCFAAA), 170–190 (LIMMFVALEIFSLPLYLLCGM), 206–226 (FLLGALSSALFLYGIVLLYGC), 249–269 (IVAGMILVAVGLLFKIGAVPF), 288–308 (MAVATKLVALVGLMRVLYVGL), 315–335 (WQIVLAVVAVASMGVGAIVGL), 343–363 (LLAYSAIAHAGFVLVGVVGAW), 380–400 (VLVYMTAYGLASIGFWLLILM), 424–444 (IGVLVVIFVLSFAGIPLTAGF), 458–478 (GYAWLVLIGVLFSLVAAAFYL), and 503–523 (IAGWITLIVCAVFTIVMGVAP).

The protein belongs to the complex I subunit 2 family. As to quaternary structure, NDH-1 is composed of 14 different subunits. Subunits NuoA, H, J, K, L, M, N constitute the membrane sector of the complex.

It localises to the cell membrane. It carries out the reaction a quinone + NADH + 5 H(+)(in) = a quinol + NAD(+) + 4 H(+)(out). In terms of biological role, NDH-1 shuttles electrons from NADH, via FMN and iron-sulfur (Fe-S) centers, to quinones in the respiratory chain. The immediate electron acceptor for the enzyme in this species is believed to be a menaquinone. Couples the redox reaction to proton translocation (for every two electrons transferred, four hydrogen ions are translocated across the cytoplasmic membrane), and thus conserves the redox energy in a proton gradient. The sequence is that of NADH-quinone oxidoreductase subunit N from Cutibacterium acnes (strain DSM 16379 / KPA171202) (Propionibacterium acnes).